Here is a 531-residue protein sequence, read N- to C-terminus: Tyrosine 2,3-aminomutase (531 aa).

The Proton donor/acceptor role is filled by Tyr51. His81 is a binding site for substrate. A cross-link (5-imidazolinone (Ala-Gly)) is located at residues 140–142 (ASG). Ser141 carries the post-translational modification 2,3-didehydroalanine (Ser). Residues Asn193 and Arg298 each coordinate substrate.

This sequence belongs to the TAL/TAM family. As to quaternary structure, homotetramer; dimer of dimers. Post-translationally, contains an active site 4-methylidene-imidazol-5-one (MIO), which is formed autocatalytically by cyclization and dehydration of residues Ala-Ser-Gly.

It carries out the reaction L-tyrosine = 3-amino-3-(4-hydroxyphenyl)propanoate. It catalyses the reaction L-tyrosine = (E)-4-coumarate + NH4(+). Has aminomutase and, to a lesser extent, ammonia-lyase activity. Primarily, catalyzes the rearrangement of L-tyrosine to R-beta-tyrosine, which is incorporated into secondary metabolites called chondramides. The aminomutase activity mainly produces R-beta-tyrosine but also S-beta tyrosine in smaller amounts. Does not accept D-tyrosine, L-histidine or L-phenylalanine as substrates. This Chondromyces crocatus protein is Tyrosine 2,3-aminomutase.